A 124-amino-acid chain; its full sequence is Large ribosomal subunit protein bL12 (124 aa).

The protein belongs to the bacterial ribosomal protein bL12 family. In terms of assembly, homodimer. Part of the ribosomal stalk of the 50S ribosomal subunit. Forms a multimeric L10(L12)X complex, where L10 forms an elongated spine to which 2 to 4 L12 dimers bind in a sequential fashion. Binds GTP-bound translation factors.

Its function is as follows. Forms part of the ribosomal stalk which helps the ribosome interact with GTP-bound translation factors. Is thus essential for accurate translation. This chain is Large ribosomal subunit protein bL12, found in Brucella abortus (strain S19).